Reading from the N-terminus, the 531-residue chain is Histone-arginine methyltransferase CARMER (531 aa).

The region spanning 141-450 (ASQYFQFYGY…QSYDVTIDLH (310 aa)) is the SAM-dependent MTase PRMT-type domain. Residues Gln154, Arg163, Gly187, Glu209, Glu238, and Thr266 each contribute to the S-adenosyl-L-methionine site. Arg501 carries the asymmetric dimethylarginine; by autocatalysis modification.

The protein belongs to the class I-like SAM-binding methyltransferase superfamily. Protein arginine N-methyltransferase family. As to quaternary structure, homodimer. The dimethylated protein is the major form.

Its subcellular location is the cytoplasm. The protein localises to the nucleus. The enzyme catalyses L-arginyl-[protein] + 2 S-adenosyl-L-methionine = N(omega),N(omega)-dimethyl-L-arginyl-[protein] + 2 S-adenosyl-L-homocysteine + 2 H(+). In terms of biological role, methylates (mono- and asymmetric dimethylation) the guanidino nitrogens of arginyl residues in proteins. May methylate histone H3 at 'Arg-17' and activate transcription via chromatin remodeling. The polypeptide is Histone-arginine methyltransferase CARMER (Art4) (Drosophila persimilis (Fruit fly)).